We begin with the raw amino-acid sequence, 331 residues long: uncharacterized protein (331 aa).

Residue 43-50 (GANESGKS) coordinates ATP.

This is an uncharacterized protein from Methanocaldococcus jannaschii (strain ATCC 43067 / DSM 2661 / JAL-1 / JCM 10045 / NBRC 100440) (Methanococcus jannaschii).